The chain runs to 609 residues: Phosphatidylinositol N-acetylglucosaminyltransferase subunit GPI1 (609 aa).

The Extracellular segment spans residues 1-186 (MPNYIFWPYE…STCIYKMVAK (186 aa)). The helical transmembrane segment at 187 to 207 (IGFYLTFVICSIASLVSSLLN) threads the bilayer. Residues 208-280 (YSHFQLVNYS…FYPDYILLYN (73 aa)) lie on the Cytoplasmic side of the membrane. A helical transmembrane segment spans residues 281-301 (TIWLIINDISFGLILGAILIE). At 302 to 380 (NRDFLVSASH…LSSLLTLTIY (79 aa)) the chain is on the extracellular side. The helical transmembrane segment at 381 to 401 (MMFLVGFSFAVSLAIDFFAIL) threads the bilayer. Topologically, residues 402–451 (SFPIYVFYRISSKLYHCQLNIMASLFNLFCGKKRNVLRNRIDHNYFQLDQ) are cytoplasmic. The chain crosses the membrane as a helical span at residues 452 to 472 (LLLGTLLFIILVFLTPTVMAF). The Extracellular segment spans residues 473–485 (YMSYTVLRMLTIT). A helical membrane pass occupies residues 486–506 (IEIFSEAVIALINHFPLFALL). The Cytoplasmic segment spans residues 507–609 (LRLKDPKRLP…DLYKRLTIQA (103 aa)).

It belongs to the PIGQ family. In terms of assembly, component of the phosphatidylinositol N-acetylglucosaminyltransferase (GPI-GlcNAc transferase) complex composed of at least GPI1, GPI2, GPI3, GPI15, GPI19 and ERI1.

The protein resides in the membrane. It carries out the reaction a 1,2-diacyl-sn-glycero-3-phospho-(1D-myo-inositol) + UDP-N-acetyl-alpha-D-glucosamine = a 6-(N-acetyl-alpha-D-glucosaminyl)-1-(1,2-diacyl-sn-glycero-3-phospho)-1D-myo-inositol + UDP + H(+). It functions in the pathway glycolipid biosynthesis; glycosylphosphatidylinositol-anchor biosynthesis. Functionally, part of the complex catalyzing the transfer of N-acetylglucosamine from UDP-N-acetylglucosamine to phosphatidylinositol, the first step of GPI biosynthesis. This Saccharomyces cerevisiae (strain ATCC 204508 / S288c) (Baker's yeast) protein is Phosphatidylinositol N-acetylglucosaminyltransferase subunit GPI1 (GPI1).